A 63-amino-acid polypeptide reads, in one-letter code: Kurtoxin-like II (63 aa).

The region spanning 2–62 is the LCN-type CS-alpha/beta domain; the sequence is IDGYPVDYWN…ARIKRSGRCR (61 aa). 4 disulfide bridges follow: C12–C61, C16–C37, C23–C44, and C27–C46.

Belongs to the long (4 C-C) scorpion toxin superfamily. Sodium channel inhibitor family. Alpha subfamily. In terms of tissue distribution, expressed by the venom gland.

The protein resides in the secreted. Functionally, this neurotoxin acts on sodium and calcium channels. Potently inhibits native voltage-gated T-type calcium channel activity in mouse male germ cells. Also binds Cav3.1/CACNA1G, Cav3.2/CACNA1H, and Cav3.3/CACNA1I T-type calcium channels and inhibits the channels by modifying voltage-dependent gating. In addition, binds and significantly inhibits the inactivation of activated sodium channels (Nav1.2/SCN2A and Nav1.5/SCN5A). This chain is Kurtoxin-like II, found in Parabuthus granulatus (Granulated thick-tailed scorpion).